The chain runs to 258 residues: Imidazole glycerol phosphate synthase subunit HisF (258 aa).

Catalysis depends on residues aspartate 11 and aspartate 130.

Belongs to the HisA/HisF family. In terms of assembly, heterodimer of HisH and HisF.

It is found in the cytoplasm. The enzyme catalyses 5-[(5-phospho-1-deoxy-D-ribulos-1-ylimino)methylamino]-1-(5-phospho-beta-D-ribosyl)imidazole-4-carboxamide + L-glutamine = D-erythro-1-(imidazol-4-yl)glycerol 3-phosphate + 5-amino-1-(5-phospho-beta-D-ribosyl)imidazole-4-carboxamide + L-glutamate + H(+). It participates in amino-acid biosynthesis; L-histidine biosynthesis; L-histidine from 5-phospho-alpha-D-ribose 1-diphosphate: step 5/9. Its function is as follows. IGPS catalyzes the conversion of PRFAR and glutamine to IGP, AICAR and glutamate. The HisF subunit catalyzes the cyclization activity that produces IGP and AICAR from PRFAR using the ammonia provided by the HisH subunit. The sequence is that of Imidazole glycerol phosphate synthase subunit HisF from Methylorubrum populi (strain ATCC BAA-705 / NCIMB 13946 / BJ001) (Methylobacterium populi).